Here is an 887-residue protein sequence, read N- to C-terminus: UPF0182 protein CTC_00086 (887 aa).

7 consecutive transmembrane segments (helical) span residues 9–29 (FIAI…SFII), 47–67 (FFTI…SIWL), 87–107 (LMIA…SSKY), 146–166 (VLIL…YFII), 195–215 (GKQL…GYII), 242–262 (IYRI…ISII), and 266–286 (IKPI…EGAT).

This sequence belongs to the UPF0182 family.

It localises to the cell membrane. This Clostridium tetani (strain Massachusetts / E88) protein is UPF0182 protein CTC_00086.